Consider the following 548-residue polypeptide: Probable inorganic phosphate transporter 1-5 (548 aa).

The Cytoplasmic segment spans residues 1–23 (MVQDRKVLDALDTAKTQWYHFTA). The chain crosses the membrane as a helical span at residues 24 to 44 (VVIAGMGFFTDAYDLFSISLV). Topologically, residues 45–69 (TKLLGRIYYFNPASKSPGSLPPNVS) are extracellular. Residues 70-90 (AAVNGVAFCGTLAGQLFFGWL) traverse the membrane as a helical segment. Topologically, residues 91–98 (GDKMGRKK) are cytoplasmic. Residues 99–119 (VYGMTLMLMVICCLASGLSFG) traverse the membrane as a helical segment. The Extracellular portion of the chain corresponds to 120 to 123 (SSAK). A helical transmembrane segment spans residues 124–144 (GVMATLCFFRFWLGFGIGGDY). Topologically, residues 145 to 163 (PLSATIMSEYANKRTRGAF) are cytoplasmic. Residues 164–184 (IAAVFAMQGFGNLTGGIVAII) traverse the membrane as a helical segment. The Extracellular portion of the chain corresponds to 185–210 (VSAAFKLRFDAPAYRDDRAGSTVPQA). Residues 211-231 (DYAWRIVLMFGAIPALLTYYW) form a helical membrane-spanning segment. Over 232–303 (RMKMPETARY…REFARRHGHH (72 aa)) the chain is Cytoplasmic. Residues 304–324 (LLGTTVCWFVLDIAYYSQNLF) traverse the membrane as a helical segment. The Extracellular portion of the chain corresponds to 325 to 355 (QKDIYTAVQWLPKADTMSALEEMFKISRAQT). The helical transmembrane segment at 356-376 (LVALCGTIPGYWFTVLFIDIV) threads the bilayer. At 377 to 378 (GR) the chain is on the cytoplasmic side. Residues 379-399 (FAIQLGGFFLMTAFMLGLAVP) traverse the membrane as a helical segment. The Extracellular segment spans residues 400–405 (YHHWTT). Residues 406-426 (PGNHVGFVVMYAFTFFFANFG) form a helical membrane-spanning segment. Residues 427–449 (PNSTTFIVPAEIFPARLRSTCHG) lie on the Cytoplasmic side of the membrane. The helical transmembrane segment at 450–470 (ISSAAGKMGAIVGSFGFLYAA) threads the bilayer. The Extracellular portion of the chain corresponds to 471–490 (QSTDPSKTDAGYPRGIGVRN). A helical membrane pass occupies residues 491-511 (SLFLLAGCNVVGFLFTFLVPE). Residues 512 to 548 (SKGKSLEELSGENEMEAEPAAATNSYRQTVPDSGQSE) are Cytoplasmic-facing. Residues 518-548 (EELSGENEMEAEPAAATNSYRQTVPDSGQSE) are disordered. A compositionally biased stretch (polar residues) spans 533 to 548 (ATNSYRQTVPDSGQSE).

It belongs to the major facilitator superfamily. Phosphate:H(+) symporter (TC 2.A.1.9) family. As to expression, expressed at low levels in roots.

The protein localises to the membrane. Functionally, high-affinity transporter for external inorganic phosphate. This chain is Probable inorganic phosphate transporter 1-5 (PHT1-5), found in Oryza sativa subsp. japonica (Rice).